Reading from the N-terminus, the 547-residue chain is MAAKDVKFGDSARKKMLVGVNVLADAVKATLGPKGRNVVLAKSFGAPTITKDGVSVAKEIELKDAFENMGAQLVKEVASKANDAAGDGTTTATVLAQAIVNEGLKAVAAGMNPMDLKRGIDKATAAVVAELKNLSKPCADSKAIAQVGTISANSDDSIGNIIAEAMEKVGKEGVITVEEGSGLENELSVVEGMQFDRGYLSPYFVNKPDTMVAELEGPLLLLVDKKISNIRELLPVLEAVAKAGRPLLIVAEDVEGEALATLVVNNMRGIVKVAAVKAPGFGDRRKAMLQDIAVLTGGQVISEEIGLSLETATLEHLGNAKRVILSKENTTIIDGAGADTEIEARVKQIRAQIEETSSDYDREKLQERLAKLAGGVAVIKVGAGTEVEMKEKKARVEDALHATRAAVEEGVVPGGGVALVRALAAIVDLKGENEDQNVGIALLRRAVEAPLRQITANAGDEPSVVADKVKQGSGNFGYNAATGEYGDMIEMGILDPAKVTRSALQAAASIGGLMITTEAMIADAPSEAPAGGGMPDMGGMGGMGGMM.

Residues threonine 30–proline 33, lysine 51, aspartate 87–threonine 91, glycine 415, asparagine 479–alanine 481, and aspartate 495 contribute to the ATP site.

It belongs to the chaperonin (HSP60) family. Forms a cylinder of 14 subunits composed of two heptameric rings stacked back-to-back. Interacts with the co-chaperonin GroES.

The protein resides in the cytoplasm. The catalysed reaction is ATP + H2O + a folded polypeptide = ADP + phosphate + an unfolded polypeptide.. Functionally, together with its co-chaperonin GroES, plays an essential role in assisting protein folding. The GroEL-GroES system forms a nano-cage that allows encapsulation of the non-native substrate proteins and provides a physical environment optimized to promote and accelerate protein folding. The protein is Chaperonin GroEL of Pseudomonas putida (strain GB-1).